A 1577-amino-acid chain; its full sequence is Vacuolar protein sorting/targeting protein PEP1 (1577 aa).

A signal peptide spans methionine 1 to alanine 21. The Lumenal segment spans residues glutamate 22 to alanine 1391. BNR repeat units lie at residues isoleucine 58–lysine 68 and tyrosine 101–glutamate 111. N-linked (GlcNAc...) asparagine glycans are attached at residues asparagine 121 and asparagine 168. 2 BNR repeats span residues serine 179–serine 187 and isoleucine 414–threonine 423. Asparagine 445 is a glycosylation site (N-linked (GlcNAc...) asparagine). BNR repeat units lie at residues phenylalanine 485–lysine 495, tyrosine 531–threonine 541, and tyrosine 762–isoleucine 771. The N-linked (GlcNAc...) asparagine glycan is linked to asparagine 791. A BNR 8 repeat occupies tyrosine 859–threonine 869. N-linked (GlcNAc...) asparagine glycosylation is present at asparagine 1008. BNR repeat units lie at residues phenylalanine 1141–tryptophan 1150 and tyrosine 1183–lysine 1192. Asparagine 1301 carries N-linked (GlcNAc...) asparagine glycosylation. The chain crosses the membrane as a helical span at residues glycine 1392–valine 1412. Residues tyrosine 1413–glutamine 1577 lie on the Cytoplasmic side of the membrane. A disordered region spans residues aspartate 1531–glutamine 1577.

Belongs to the VPS10-related sortilin family.

It localises to the golgi apparatus. It is found in the trans-Golgi network membrane. The protein resides in the prevacuolar compartment membrane. Functionally, functions as a sorting receptor in the Golgi compartment required for the intracellular sorting and delivery of soluble vacuolar proteins, like carboxypeptidase Y (CPY) and proteinase A. Executes multiple rounds of sorting by cycling between the late Golgi and a prevacuolar endosome-like compartment. Binds the Golgi-modified P2 form of CPY, and this interaction is dependent on the presence of an intact CPY vacuolar protein sorting signal. In Saccharomyces cerevisiae (strain Lalvin EC1118 / Prise de mousse) (Baker's yeast), this protein is Vacuolar protein sorting/targeting protein PEP1 (PEP1).